A 381-amino-acid chain; its full sequence is MAPNIRKSHPLLKIVNNSLIDLPSPSNISTWWNFGSLLGICLITPILTGVMLAMHYTADTSLAFSSVAHICRDVQYGWMIRNLHANGASFFFICIYLHIGRGFYYGSYLYKETWNTGIILLLTLMATAFVGYVLPWGQMSFWGATVITNLFSAIPYIGQTLVEWAWGGFSVDNPTLTRFFALHFLLPFLIAGISIVHLTFLHETGSNNPLGIVSHCDKIPFHPYFSMKDLLGFTLLSLPFLALAFFTPNLLGDPENFTPANPLVTPPHIKPEWYFLFAYAILRSIPNKLGGVLALAASVLILFTIPLLHKSKMRSMTFRPMSQILFWLLVANLFILTWVGSQPVEHPFIIIGQLASLSYFTILLFLFPITATLENKILYQY.

Helical transmembrane passes span 34–54 (FGSLLGICLITPILTGVMLAM), 78–99 (WMIRNLHANGASFFFICIYLHI), 114–134 (WNTGIILLLTLMATAFVGYVL), and 179–199 (FFALHFLLPFLIAGISIVHLT). The heme b site is built by His-84 and His-98. Heme b is bound by residues His-183 and His-197. Residue His-202 coordinates a ubiquinone. 4 consecutive transmembrane segments (helical) span residues 227 to 247 (MKDLLGFTLLSLPFLALAFFT), 289 to 309 (LGGVLALAASVLILFTIPLLH), 321 to 341 (MSQILFWLLVANLFILTWVGS), and 348 to 368 (FIIIGQLASLSYFTILLFLFP).

The protein belongs to the cytochrome b family. The cytochrome bc1 complex contains 11 subunits: 3 respiratory subunits (MT-CYB, CYC1 and UQCRFS1), 2 core proteins (UQCRC1 and UQCRC2) and 6 low-molecular weight proteins (UQCRH/QCR6, UQCRB/QCR7, UQCRQ/QCR8, UQCR10/QCR9, UQCR11/QCR10 and a cleavage product of UQCRFS1). This cytochrome bc1 complex then forms a dimer. Heme b is required as a cofactor.

The protein resides in the mitochondrion inner membrane. Functionally, component of the ubiquinol-cytochrome c reductase complex (complex III or cytochrome b-c1 complex) that is part of the mitochondrial respiratory chain. The b-c1 complex mediates electron transfer from ubiquinol to cytochrome c. Contributes to the generation of a proton gradient across the mitochondrial membrane that is then used for ATP synthesis. This chain is Cytochrome b (MT-CYB), found in Nothoprocta perdicaria (Chilean tinamou).